The sequence spans 138 residues: MLQPARRKYRKEQKGRNTGVATRGNSVAFGDFGLKCTDRGRLTARQIEAARRAISRHVKRGGRIWIRVFPDKPISQKPAEVRMGNGKGNPEYYVAEIQPGKIVFEIVGVPEELAREAFRLASAKLPLRTTFVSRMIGQ.

Over residues 1-13 (MLQPARRKYRKEQ) the composition is skewed to basic residues. Residues 1–22 (MLQPARRKYRKEQKGRNTGVAT) form a disordered region.

It belongs to the universal ribosomal protein uL16 family. Part of the 50S ribosomal subunit.

Its function is as follows. Binds 23S rRNA and is also seen to make contacts with the A and possibly P site tRNAs. In Polaromonas sp. (strain JS666 / ATCC BAA-500), this protein is Large ribosomal subunit protein uL16.